The chain runs to 362 residues: 3-isopropylmalate dehydrogenase (362 aa).

Gly-78–Glu-91 contacts NAD(+). Substrate-binding residues include Arg-99, Arg-109, Arg-138, and Asp-227. Positions 227, 251, and 255 each coordinate Mg(2+). Gly-285–Asn-297 serves as a coordination point for NAD(+).

This sequence belongs to the isocitrate and isopropylmalate dehydrogenases family. LeuB type 1 subfamily. As to quaternary structure, homodimer. Requires Mg(2+) as cofactor. Mn(2+) serves as cofactor.

The protein localises to the cytoplasm. The enzyme catalyses (2R,3S)-3-isopropylmalate + NAD(+) = 4-methyl-2-oxopentanoate + CO2 + NADH. It functions in the pathway amino-acid biosynthesis; L-leucine biosynthesis; L-leucine from 3-methyl-2-oxobutanoate: step 3/4. Catalyzes the oxidation of 3-carboxy-2-hydroxy-4-methylpentanoate (3-isopropylmalate) to 3-carboxy-4-methyl-2-oxopentanoate. The product decarboxylates to 4-methyl-2 oxopentanoate. The chain is 3-isopropylmalate dehydrogenase from Geobacter sulfurreducens (strain ATCC 51573 / DSM 12127 / PCA).